The sequence spans 574 residues: Polyamine aminopropyltransferase (574 aa).

The next 7 membrane-spanning stretches (helical) occupy residues 22–42 (VLLLGIMAVLAGCGLIYEYLL), 55–75 (AAIYTMIGLMIVSMGLGAFAA), 90–110 (LTVALCGSLAILITAAVIGFG), 144–164 (LPYFWGVLLGLMIGMEIPLIA), 188–208 (IGAGIGAAIWVGFMLAIDIQL), 209–229 (AAALTASFNLLAGFVFIWRFW), and 237–257 (LLLAAHLVVTGVLLLLAIQGP). The interval 254-510 (IQGPSWEQQF…ATLDGKDAQH (257 aa)) is spermidine synthase. The PABS domain maps to 257-505 (PSWEQQFNNL…WGWSIATLDG (249 aa)). S-methyl-5'-thioadenosine is bound at residue Q281. Positions 317 and 341 each coordinate spermidine. Residues D360 and 403–404 (DA) each bind S-methyl-5'-thioadenosine. Catalysis depends on D424, which acts as the Proton acceptor.

Belongs to the spermidine/spermine synthase family. In terms of assembly, homodimer or homotetramer.

It is found in the cell membrane. It catalyses the reaction S-adenosyl 3-(methylsulfanyl)propylamine + putrescine = S-methyl-5'-thioadenosine + spermidine + H(+). The protein operates within amine and polyamine biosynthesis; spermidine biosynthesis; spermidine from putrescine: step 1/1. Catalyzes the irreversible transfer of a propylamine group from the amino donor S-adenosylmethioninamine (decarboxy-AdoMet) to putrescine (1,4-diaminobutane) to yield spermidine. This chain is Polyamine aminopropyltransferase, found in Shewanella oneidensis (strain ATCC 700550 / JCM 31522 / CIP 106686 / LMG 19005 / NCIMB 14063 / MR-1).